A 208-amino-acid chain; its full sequence is MTTEIHSNPANRPNRIASVERNTAETQVSVTVNLDGTGQGKIDTGVPFLDHMLDQIKRHGLFDLDITCKGDTYIDDHHSIEDTGITLGQAFAKALGDKKGIRRYGHFYAPLDESLTRAVVDISGRPGLHMDIPFTRSHVGNFDVDLFSEFFFGFVNHAWMTVHLDNLKGKNSHHQIECTFKAFARALRMACEYDERALNTLPSTKEAL.

It belongs to the imidazoleglycerol-phosphate dehydratase family.

The protein resides in the cytoplasm. The catalysed reaction is D-erythro-1-(imidazol-4-yl)glycerol 3-phosphate = 3-(imidazol-4-yl)-2-oxopropyl phosphate + H2O. The protein operates within amino-acid biosynthesis; L-histidine biosynthesis; L-histidine from 5-phospho-alpha-D-ribose 1-diphosphate: step 6/9. This chain is Imidazoleglycerol-phosphate dehydratase, found in Psychrobacter sp. (strain PRwf-1).